We begin with the raw amino-acid sequence, 201 residues long: Ras-related protein Rab-1B (201 aa).

Position 1 is an N-acetylmethionine (methionine 1). Residues serine 17, glycine 18, valine 19, glycine 20, lysine 21, serine 22, cysteine 23, tyrosine 33, threonine 34, glutamate 35, serine 36, serine 39, and threonine 40 each coordinate GTP. Serine 22 contributes to the Mg(2+) binding site. A Switch 1 motif is present at residues 30-45; sequence DDTYTESYISTIGVDF. Mg(2+) contacts are provided by threonine 40 and aspartate 63. Positions 64 to 83 are switch 2 region; required for interaction with REP1/CHM; it reads TAGQERFRTVTSSYYRGAHG. Positions 65–80 match the Switch 2 motif; that stretch reads AGQERFRTVTSSYYRG. GTP-binding residues include glycine 66, asparagine 121, lysine 122, aspartate 124, serine 151, alanine 152, and lysine 153. Positions 173-201 are disordered; it reads MGPGAASGGERPNLKIDSTPVKSASGGCC. 2 S-geranylgeranyl cysteine lipidation sites follow: cysteine 200 and cysteine 201. Cysteine 201 carries the post-translational modification Cysteine methyl ester.

It belongs to the small GTPase superfamily. Rab family. Interacts with MICAL1 and MICAL2. Interacts (in GTP-bound form) with MICALCL, MICAL1 and MILCAL3. Interacts with GDI1; the interaction requires the GDP-bound state. Interacts with CHM/REP1; the interaction requires the GDP-bound form and is necessary for prenylation by GGTase II. Interacts with RabGAP TBC1D20. Interacts (in GDP-bound form) with lipid phosphatase MTMR6 (via GRAM domain); the interaction regulates MTMR6 recruitment to the endoplasmic reticulum-Golgi intermediate compartment. Interacts (in GDP-bound form) with lipid phosphatase MTMR7. Mg(2+) serves as cofactor. In terms of processing, prenylated; by GGTase II, only after interaction of the substrate with Rab escort protein 1 (REP1).

Its subcellular location is the cytoplasm. The protein resides in the membrane. The protein localises to the preautophagosomal structure membrane. It localises to the perinuclear region. The enzyme catalyses GTP + H2O = GDP + phosphate + H(+). Its activity is regulated as follows. Regulated by guanine nucleotide exchange factors (GEFs) which promote the exchange of bound GDP for free GTP. Regulated by GTPase activating proteins (GAPs) including TBC1D20 which increases the GTP hydrolysis activity. Inhibited by GDP dissociation inhibitors (GDIs). The small GTPases Rab are key regulators of intracellular membrane trafficking, from the formation of transport vesicles to their fusion with membranes. Rabs cycle between an inactive GDP-bound form and an active GTP-bound form that is able to recruit to membranes different set of downstream effectors directly responsible for vesicle formation, movement, tethering and fusion. Plays a role in the initial events of the autophagic vacuole development which take place at specialized regions of the endoplasmic reticulum. Regulates vesicular transport between the endoplasmic reticulum and successive Golgi compartments. Required to modulate the compacted morphology of the Golgi. Promotes the recruitment of lipid phosphatase MTMR6 to the endoplasmic reticulum-Golgi intermediate compartment. The protein is Ras-related protein Rab-1B (Rab1b) of Rattus norvegicus (Rat).